Reading from the N-terminus, the 160-residue chain is Transcription elongation factor GreA (160 aa).

Residues 3 to 84 (NIVDDKILLT…SKAKIIKADL (82 aa)) are a coiled coil.

The protein belongs to the GreA/GreB family.

Its function is as follows. Necessary for efficient RNA polymerase transcription elongation past template-encoded arresting sites. The arresting sites in DNA have the property of trapping a certain fraction of elongating RNA polymerases that pass through, resulting in locked ternary complexes. Cleavage of the nascent transcript by cleavage factors such as GreA or GreB allows the resumption of elongation from the new 3'terminus. GreA releases sequences of 2 to 3 nucleotides. The protein is Transcription elongation factor GreA of Mesomycoplasma hyopneumoniae (strain J / ATCC 25934 / NCTC 10110) (Mycoplasma hyopneumoniae).